Consider the following 306-residue polypeptide: Lipoyl synthase (306 aa).

[4Fe-4S] cluster is bound by residues C52, C57, C63, C78, C82, C85, and S289. In terms of domain architecture, Radical SAM core spans 64 to 278 (WNRKTATYML…KETAYKIGFK (215 aa)).

This sequence belongs to the radical SAM superfamily. Lipoyl synthase family. [4Fe-4S] cluster serves as cofactor.

It localises to the cytoplasm. It carries out the reaction [[Fe-S] cluster scaffold protein carrying a second [4Fe-4S](2+) cluster] + N(6)-octanoyl-L-lysyl-[protein] + 2 oxidized [2Fe-2S]-[ferredoxin] + 2 S-adenosyl-L-methionine + 4 H(+) = [[Fe-S] cluster scaffold protein] + N(6)-[(R)-dihydrolipoyl]-L-lysyl-[protein] + 4 Fe(3+) + 2 hydrogen sulfide + 2 5'-deoxyadenosine + 2 L-methionine + 2 reduced [2Fe-2S]-[ferredoxin]. Its pathway is protein modification; protein lipoylation via endogenous pathway; protein N(6)-(lipoyl)lysine from octanoyl-[acyl-carrier-protein]: step 2/2. Its function is as follows. Catalyzes the radical-mediated insertion of two sulfur atoms into the C-6 and C-8 positions of the octanoyl moiety bound to the lipoyl domains of lipoate-dependent enzymes, thereby converting the octanoylated domains into lipoylated derivatives. The chain is Lipoyl synthase from Leptospira biflexa serovar Patoc (strain Patoc 1 / Ames).